We begin with the raw amino-acid sequence, 1705 residues long: Intersectin-1 (1705 aa).

2 EH domains span residues E21–M109 and S220–R309. 2 consecutive EF-hand domains span residues L53–K88 and L253–A288. Residues D66, N68, D70, R72, E77, D266, D268, D270, K272, and E277 each coordinate Ca(2+). Disordered regions lie at residues V322–N355, R386–E433, and R668–P708. A KLERQ region spans residues D325–K697. Positions N339–N355 are enriched in basic and acidic residues. Positions D350–E687 form a coiled coil. Residues R668–N699 show a composition bias toward basic and acidic residues. The region spanning V732–E793 is the SH3 1 domain. Residues A823 to N833 are compositionally biased toward low complexity. The interval A823–S851 is disordered. Positions W834 to T846 are enriched in polar residues. An SH3 2 domain is found at V897–G955. The segment at K959–S978 is disordered. Residues S960 to S973 show a composition bias toward low complexity. SH3 domains are found at residues I986–S1044, K1058–P1122, and P1139–D1198. The Bipartite nuclear localization signal; in isoform 2 motif lies at R1088–W1111. The DH domain maps to K1221 to G1407. One can recognise a PH domain in the interval K1446–E1555. The C2 domain maps to K1563–V1679. Ca(2+) contacts are provided by D1651, S1654, and D1657.

Binds epn1 and epn2. Requires Ca(2+) as cofactor.

It is found in the endomembrane system. The protein localises to the synapse. It localises to the synaptosome. The protein resides in the cell projection. Its subcellular location is the lamellipodium. It is found in the cell membrane. The protein localises to the membrane. It localises to the clathrin-coated pit. The protein resides in the recycling endosome. Its subcellular location is the cytoplasm. It is found in the nucleus envelope. Its function is as follows. Adapter protein that provides a link between the endocytic membrane traffic and the actin assembly machinery. Acts as a guanine nucleotide exchange factor (GEF) for cdc42, and thereby stimulates actin nucleation mediated by wasl and the arp2/3 complex. Involved in endocytosis of activated egfr, and probably also other growth factor receptors. The chain is Intersectin-1 (itsn1) from Xenopus laevis (African clawed frog).